Here is a 361-residue protein sequence, read N- to C-terminus: 3-dehydroquinate synthase (361 aa).

NAD(+) is bound by residues 73–78 (DAEAGK), 107–111 (GAATD), 131–132 (TT), Lys144, Lys153, and 171–174 (TLET). Residues Glu186, His249, and His265 each contribute to the Zn(2+) site.

It belongs to the sugar phosphate cyclases superfamily. Dehydroquinate synthase family. Requires NAD(+) as cofactor. Co(2+) serves as cofactor. It depends on Zn(2+) as a cofactor.

It is found in the cytoplasm. The enzyme catalyses 7-phospho-2-dehydro-3-deoxy-D-arabino-heptonate = 3-dehydroquinate + phosphate. The protein operates within metabolic intermediate biosynthesis; chorismate biosynthesis; chorismate from D-erythrose 4-phosphate and phosphoenolpyruvate: step 2/7. Its function is as follows. Catalyzes the conversion of 3-deoxy-D-arabino-heptulosonate 7-phosphate (DAHP) to dehydroquinate (DHQ). The sequence is that of 3-dehydroquinate synthase from Mycobacterium leprae (strain TN).